We begin with the raw amino-acid sequence, 291 residues long: MDYLIKAIAYDGKVRAYAARTTDMVNEAQRRHDTWPTASAAIGRTMTASLMLGAMLKGEDKLTVKIEGGGPIGAIVADANAKGEVRAYVSNPHVHFDLNEQGKLDVRRAVGTDGTLSVVKDLGLRDYFTGQVEIVSGELGDDFTYYLVSSEQVPSSVGVGVLVNPDNTILAAGGFIIQLLPGTDEETISTIEKQLSQIEPISKLIQKGLTPEEILEEVLGQKPDVLETMPVKFHCSCSKDRFETAILGLGKKEIQDMIEEDGKAEAVCHFCNEKYLFTKEELEELRDETTR.

2 disulfides stabilise this stretch: cysteine 235-cysteine 237 and cysteine 268-cysteine 271.

Belongs to the HSP33 family. Post-translationally, under oxidizing conditions two disulfide bonds are formed involving the reactive cysteines. Under reducing conditions zinc is bound to the reactive cysteines and the protein is inactive.

It is found in the cytoplasm. Functionally, redox regulated molecular chaperone. Protects both thermally unfolding and oxidatively damaged proteins from irreversible aggregation. Plays an important role in the bacterial defense system toward oxidative stress. This Bacillus velezensis (strain DSM 23117 / BGSC 10A6 / LMG 26770 / FZB42) (Bacillus amyloliquefaciens subsp. plantarum) protein is 33 kDa chaperonin.